Consider the following 853-residue polypeptide: DNA mismatch repair protein MutS (853 aa).

614 to 621 serves as a coordination point for ATP; sequence GPNMGGKS.

This sequence belongs to the DNA mismatch repair MutS family.

Functionally, this protein is involved in the repair of mismatches in DNA. It is possible that it carries out the mismatch recognition step. This protein has a weak ATPase activity. In Escherichia coli O6:K15:H31 (strain 536 / UPEC), this protein is DNA mismatch repair protein MutS.